The sequence spans 430 residues: Adenylosuccinate synthetase (430 aa).

GTP contacts are provided by residues 12–18 and 40–42; these read GDEGKGK and GHT. The active-site Proton acceptor is D13. Residues D13 and G40 each contribute to the Mg(2+) site. IMP is bound by residues 13–16, 38–41, T130, R144, Q224, T239, and R303; these read DEGK and NAGH. H41 (proton donor) is an active-site residue. 299–305 provides a ligand contact to substrate; that stretch reads VNTGRKR. GTP contacts are provided by residues R305, 331–333, and 413–415; these read KLD and STS.

Belongs to the adenylosuccinate synthetase family. In terms of assembly, homodimer. The cofactor is Mg(2+).

Its subcellular location is the cytoplasm. It carries out the reaction IMP + L-aspartate + GTP = N(6)-(1,2-dicarboxyethyl)-AMP + GDP + phosphate + 2 H(+). It functions in the pathway purine metabolism; AMP biosynthesis via de novo pathway; AMP from IMP: step 1/2. Plays an important role in the de novo pathway of purine nucleotide biosynthesis. Catalyzes the first committed step in the biosynthesis of AMP from IMP. In Nitrobacter winogradskyi (strain ATCC 25391 / DSM 10237 / CIP 104748 / NCIMB 11846 / Nb-255), this protein is Adenylosuccinate synthetase.